A 634-amino-acid polypeptide reads, in one-letter code: Glutamate--tRNA ligase (634 aa).

The 'HIGH' region motif lies at 108–118; that stretch reads PNPSGPLHIGH.

The protein belongs to the class-I aminoacyl-tRNA synthetase family. Glutamate--tRNA ligase type 2 subfamily.

It localises to the cytoplasm. It carries out the reaction tRNA(Glu) + L-glutamate + ATP = L-glutamyl-tRNA(Glu) + AMP + diphosphate. Catalyzes the attachment of glutamate to tRNA(Glu) in a two-step reaction: glutamate is first activated by ATP to form Glu-AMP and then transferred to the acceptor end of tRNA(Glu). In Methanoregula boonei (strain DSM 21154 / JCM 14090 / 6A8), this protein is Glutamate--tRNA ligase.